The sequence spans 309 residues: Glutaminase (309 aa).

Residues serine 64, asparagine 114, glutamate 160, asparagine 167, tyrosine 191, tyrosine 243, and valine 261 each coordinate substrate.

Belongs to the glutaminase family. In terms of assembly, homotetramer.

The catalysed reaction is L-glutamine + H2O = L-glutamate + NH4(+). This chain is Glutaminase, found in Rhizobium leguminosarum bv. trifolii (strain WSM2304).